Here is a 208-residue protein sequence, read N- to C-terminus: Probable GTP-binding protein EngB (208 aa).

One can recognise an EngB-type G domain in the interval 23–205 (LTSEMVILGR…RQTLLKYLLT (183 aa)). Residues 31–38 (GRSNVGKS), 57–61 (GKTRL), 84–87 (DLPG), 154–157 (TKFD), and 182–184 (FNA) contribute to the GTP site. Residues serine 38 and threonine 59 each contribute to the Mg(2+) site.

This sequence belongs to the TRAFAC class TrmE-Era-EngA-EngB-Septin-like GTPase superfamily. EngB GTPase family. The cofactor is Mg(2+).

Necessary for normal cell division and for the maintenance of normal septation. This chain is Probable GTP-binding protein EngB, found in Helicobacter pylori (strain HPAG1).